The sequence spans 382 residues: S-adenosylmethionine synthase (382 aa).

His15 is an ATP binding site. Asp17 lines the Mg(2+) pocket. K(+) is bound at residue Glu43. Residues Glu56 and Gln99 each coordinate L-methionine. Residues 99–109 (QSPDINQGVDR) form a flexible loop region. Residues 164 to 166 (DAK), 230 to 231 (RF), Asp239, 245 to 246 (RK), Ala262, and Lys266 each bind ATP. An L-methionine-binding site is contributed by Asp239. Lys270 serves as a coordination point for L-methionine.

This sequence belongs to the AdoMet synthase family. In terms of assembly, homotetramer; dimer of dimers. Requires Mg(2+) as cofactor. The cofactor is K(+).

It localises to the cytoplasm. It carries out the reaction L-methionine + ATP + H2O = S-adenosyl-L-methionine + phosphate + diphosphate. Its pathway is amino-acid biosynthesis; S-adenosyl-L-methionine biosynthesis; S-adenosyl-L-methionine from L-methionine: step 1/1. Catalyzes the formation of S-adenosylmethionine (AdoMet) from methionine and ATP. The overall synthetic reaction is composed of two sequential steps, AdoMet formation and the subsequent tripolyphosphate hydrolysis which occurs prior to release of AdoMet from the enzyme. In Psychromonas ingrahamii (strain DSM 17664 / CCUG 51855 / 37), this protein is S-adenosylmethionine synthase.